We begin with the raw amino-acid sequence, 250 residues long: Probable transcriptional regulatory protein RER_29220 (250 aa).

It belongs to the TACO1 family.

The protein resides in the cytoplasm. This Rhodococcus erythropolis (strain PR4 / NBRC 100887) protein is Probable transcriptional regulatory protein RER_29220.